The following is a 98-amino-acid chain: Defensin (98 aa).

The first 19 residues, 1–19 (MRTFLVTFVLVVVVGVISA), serve as a signal peptide directing secretion. Positions 20–58 (YPSNPVEVEAEDFDAQDPDLQTFQDTFYEVPQVHSRQKR) are excised as a propeptide. 3 cysteine pairs are disulfide-bonded: C61-C88, C74-C94, and C78-C96.

As to expression, is synthesized by the fat body and eventually secreted into the hemolymph.

Its subcellular location is the secreted. Functionally, has antiparasitic activity against promastigote forms of L.major, and antibacterial activity against Gram-positive bacterium S.aureus. Has antifungal activity against the yeasts C.albicans and S.cerevisiae, but not C.glabrata. Has antifungal activity against filamentous fungi A.fumigatus, F.culmorum, F.oxysporum, N.crassa, T.viride and T.mentagrophytes, but not B.bassiana. In Phlebotomus duboscqi (Sandfly), this protein is Defensin.